A 168-amino-acid polypeptide reads, in one-letter code: Lipoprotein signal peptidase (168 aa).

The next 3 membrane-spanning stretches (helical) occupy residues 12-32 (WYWV…WVLA), 67-87 (WQRW…TIWL), and 93-113 (NMVR…GNLI). Residues Asp-123 and Asp-141 contribute to the active site. A helical transmembrane segment spans residues 136–156 (AFNIADAAIFIGAVLIIIDSF).

The protein belongs to the peptidase A8 family.

The protein resides in the cell inner membrane. The catalysed reaction is Release of signal peptides from bacterial membrane prolipoproteins. Hydrolyzes -Xaa-Yaa-Zaa-|-(S,diacylglyceryl)Cys-, in which Xaa is hydrophobic (preferably Leu), and Yaa (Ala or Ser) and Zaa (Gly or Ala) have small, neutral side chains.. It functions in the pathway protein modification; lipoprotein biosynthesis (signal peptide cleavage). This protein specifically catalyzes the removal of signal peptides from prolipoproteins. In Shewanella amazonensis (strain ATCC BAA-1098 / SB2B), this protein is Lipoprotein signal peptidase.